A 358-amino-acid polypeptide reads, in one-letter code: Uroporphyrinogen decarboxylase (358 aa).

Substrate-binding positions include 29–33 (RQAGR), D79, Y156, T211, and H329.

This sequence belongs to the uroporphyrinogen decarboxylase family. Homodimer.

It localises to the cytoplasm. The enzyme catalyses uroporphyrinogen III + 4 H(+) = coproporphyrinogen III + 4 CO2. Its pathway is porphyrin-containing compound metabolism; protoporphyrin-IX biosynthesis; coproporphyrinogen-III from 5-aminolevulinate: step 4/4. Functionally, catalyzes the decarboxylation of four acetate groups of uroporphyrinogen-III to yield coproporphyrinogen-III. This is Uroporphyrinogen decarboxylase from Idiomarina loihiensis (strain ATCC BAA-735 / DSM 15497 / L2-TR).